Reading from the N-terminus, the 242-residue chain is Invasion chromosome antigen R (242 aa).

It localises to the secreted. Functionally, may contribute to pathogenesis, although some of its characteristics suggest it is a fossil gene. This Shigella flexneri serotype 5a (strain M90T) protein is Invasion chromosome antigen R.